Reading from the N-terminus, the 403-residue chain is S-adenosylmethionine synthase (403 aa).

Histidine 17 serves as a coordination point for ATP. Residue aspartate 19 coordinates Mg(2+). Glutamate 45 contributes to the K(+) binding site. Glutamate 58 and glutamine 104 together coordinate L-methionine. Residues 104 to 114 (QSPDIAQGVDT) form a flexible loop region. ATP is bound by residues 179-181 (DGK), 250-251 (KF), aspartate 259, 265-266 (RK), alanine 282, and lysine 286. Residue aspartate 259 coordinates L-methionine. An L-methionine-binding site is contributed by lysine 290.

Belongs to the AdoMet synthase family. As to quaternary structure, homotetramer; dimer of dimers. Mg(2+) serves as cofactor. It depends on K(+) as a cofactor.

The protein localises to the cytoplasm. It carries out the reaction L-methionine + ATP + H2O = S-adenosyl-L-methionine + phosphate + diphosphate. It participates in amino-acid biosynthesis; S-adenosyl-L-methionine biosynthesis; S-adenosyl-L-methionine from L-methionine: step 1/1. Its function is as follows. Catalyzes the formation of S-adenosylmethionine (AdoMet) from methionine and ATP. The overall synthetic reaction is composed of two sequential steps, AdoMet formation and the subsequent tripolyphosphate hydrolysis which occurs prior to release of AdoMet from the enzyme. The chain is S-adenosylmethionine synthase from Mycobacterium avium (strain 104).